We begin with the raw amino-acid sequence, 336 residues long: MKDRYILAFETSCDETSVAVLKNDDELLSNVIASQIESHKRFGGVVPEVASRHHVEVITACIEEALAEAGITEEDVTAVAATYGPGLVGALLVGLSAAKAFAWAHGLPLIPVNHMAGHLMAAQSVEPLEFPLLALLVSGGHTELVYVSEAGDYKIVGETRDDAVGEAYDKVGRVMGLTYPAGREIDELAHQGQDIYDFPRAMIKEDNLEFSFSGLKSAFINLHHNAEQKGESLSTEDLCASFQAAVMDILMAKTKKALEKYPVKTLVVAGGVAANKGLRERLAAEITDVKVIIPPLRLCGDNAGMIAYASVSEWNKENFAGWDLNAKPSLAFDTME.

H114 and H118 together coordinate Fe cation. Substrate is bound by residues 136-140, D169, G182, D186, and N275; that span reads LVSGG. D301 serves as a coordination point for Fe cation.

Belongs to the KAE1 / TsaD family. It depends on Fe(2+) as a cofactor.

It is found in the cytoplasm. It carries out the reaction L-threonylcarbamoyladenylate + adenosine(37) in tRNA = N(6)-L-threonylcarbamoyladenosine(37) in tRNA + AMP + H(+). In terms of biological role, required for the formation of a threonylcarbamoyl group on adenosine at position 37 (t(6)A37) in tRNAs that read codons beginning with adenine. Is involved in the transfer of the threonylcarbamoyl moiety of threonylcarbamoyl-AMP (TC-AMP) to the N6 group of A37, together with TsaE and TsaB. TsaD likely plays a direct catalytic role in this reaction. This is tRNA N6-adenosine threonylcarbamoyltransferase from Streptococcus pneumoniae (strain ATCC 700669 / Spain 23F-1).